A 245-amino-acid polypeptide reads, in one-letter code: Demethylmenaquinone methyltransferase (245 aa).

S-adenosyl-L-methionine is bound by residues Thr-62, Asp-80, 105 to 106 (DA), and Ser-122.

Belongs to the class I-like SAM-binding methyltransferase superfamily. MenG/UbiE family.

It carries out the reaction a 2-demethylmenaquinol + S-adenosyl-L-methionine = a menaquinol + S-adenosyl-L-homocysteine + H(+). Its pathway is quinol/quinone metabolism; menaquinone biosynthesis; menaquinol from 1,4-dihydroxy-2-naphthoate: step 2/2. In terms of biological role, methyltransferase required for the conversion of demethylmenaquinol (DMKH2) to menaquinol (MKH2). This Clavibacter sepedonicus (Clavibacter michiganensis subsp. sepedonicus) protein is Demethylmenaquinone methyltransferase.